The chain runs to 379 residues: Queuine tRNA-ribosyltransferase (379 aa).

Asp-93 (proton acceptor) is an active-site residue. Substrate contacts are provided by residues 93–97 (DSGGF), Asp-147, Gln-191, and Gly-218. Residues 249-255 (GVGKPED) are RNA binding. Residue Asp-268 is the Nucleophile of the active site. The RNA binding; important for wobble base 34 recognition stretch occupies residues 273-277 (TRNAR). Zn(2+) is bound by residues Cys-306, Cys-308, Cys-311, and His-337.

It belongs to the queuine tRNA-ribosyltransferase family. As to quaternary structure, homodimer. Within each dimer, one monomer is responsible for RNA recognition and catalysis, while the other monomer binds to the replacement base PreQ1. Requires Zn(2+) as cofactor.

The enzyme catalyses 7-aminomethyl-7-carbaguanine + guanosine(34) in tRNA = 7-aminomethyl-7-carbaguanosine(34) in tRNA + guanine. Its pathway is tRNA modification; tRNA-queuosine biosynthesis. In terms of biological role, catalyzes the base-exchange of a guanine (G) residue with the queuine precursor 7-aminomethyl-7-deazaguanine (PreQ1) at position 34 (anticodon wobble position) in tRNAs with GU(N) anticodons (tRNA-Asp, -Asn, -His and -Tyr). Catalysis occurs through a double-displacement mechanism. The nucleophile active site attacks the C1' of nucleotide 34 to detach the guanine base from the RNA, forming a covalent enzyme-RNA intermediate. The proton acceptor active site deprotonates the incoming PreQ1, allowing a nucleophilic attack on the C1' of the ribose to form the product. After dissociation, two additional enzymatic reactions on the tRNA convert PreQ1 to queuine (Q), resulting in the hypermodified nucleoside queuosine (7-(((4,5-cis-dihydroxy-2-cyclopenten-1-yl)amino)methyl)-7-deazaguanosine). The polypeptide is Queuine tRNA-ribosyltransferase (Mannheimia succiniciproducens (strain KCTC 0769BP / MBEL55E)).